Reading from the N-terminus, the 72-residue chain is Alpha-conotoxin SII (72 aa).

Residues M1–S21 form the signal peptide. Residues F22 to R50 constitute a propeptide that is removed on maturation. The segment at P23–G51 is disordered. Residues R26–G49 show a composition bias toward basic and acidic residues. Cystine bridges form between C52/C68, C53/C58, and C54/C64. The propeptide occupies R70–L72.

It belongs to the conotoxin A superfamily. Post-translationally, the disulfide bond Cys-52-Cys-68 (Cys I-VI), which corresponds to an extra disulfide bond when compared to the cysteine framework I (CC-C-C), does contribute to conotoxin SII stability and imparts a unique binding mode at the nAChR. Expressed by the venom duct.

The protein resides in the secreted. Alpha-conotoxins act on postsynaptic membranes, they bind to the nicotinic acetylcholine receptors (nAChR) and thus inhibit them. This toxin potently inhibits the rodent muscle nAChR (IC(50)=120 nM (adult subtype, alpha-1-beta-1-delta-epsilon/CHRNA1-CHRNB1-CHRND-CHRNE) and IC(50)=370 nM (fetal subtype, alpha-1-beta-1-gamma-delta/CHRNA1-CHRNB1-CHRNG-CHRND)) and weakly inhibits neuronal nAChRs. In contrast to alpha-conotoxins bearing 2 disulfide bonds (framework I), this conotoxin acts via a unique binding mode with the helix and the N- and C-termini buried in the binding pocket of muscle nAChRs. The polypeptide is Alpha-conotoxin SII (Conus striatus (Striated cone)).